The sequence spans 150 residues: D-aminoacyl-tRNA deacylase (150 aa).

The short motif at Gly-138–Pro-139 is the Gly-cisPro motif, important for rejection of L-amino acids element.

It belongs to the DTD family. In terms of assembly, homodimer.

It localises to the cytoplasm. It carries out the reaction glycyl-tRNA(Ala) + H2O = tRNA(Ala) + glycine + H(+). The enzyme catalyses a D-aminoacyl-tRNA + H2O = a tRNA + a D-alpha-amino acid + H(+). Functionally, an aminoacyl-tRNA editing enzyme that deacylates mischarged D-aminoacyl-tRNAs. Also deacylates mischarged glycyl-tRNA(Ala), protecting cells against glycine mischarging by AlaRS. Acts via tRNA-based rather than protein-based catalysis; rejects L-amino acids rather than detecting D-amino acids in the active site. By recycling D-aminoacyl-tRNA to D-amino acids and free tRNA molecules, this enzyme counteracts the toxicity associated with the formation of D-aminoacyl-tRNA entities in vivo and helps enforce protein L-homochirality. The sequence is that of D-aminoacyl-tRNA deacylase from Bacteroides fragilis (strain ATCC 25285 / DSM 2151 / CCUG 4856 / JCM 11019 / LMG 10263 / NCTC 9343 / Onslow / VPI 2553 / EN-2).